The chain runs to 506 residues: Alpha-L-arabinofuranosidase B (506 aa).

Residues 1-26 form the signal peptide; it reads MSSGLSLERACAVALGIVASASLVAA. Residues 27–343 form a catalytic region; it reads GPCDIYSSGG…ADIVAAKYAI (317 aa). 3 cysteine pairs are disulfide-bonded: Cys-29–Cys-39, Cys-89–Cys-94, and Cys-184–Cys-185. Residue Asn-91 is glycosylated (N-linked (GlcNAc...) asparagine). Asp-227 contacts substrate. The Nucleophile role is filled by Glu-229. Substrate contacts are provided by Asn-230 and Gly-304. Asp-305 (proton donor) is an active-site residue. The tract at residues 344-506 is ABD; it reads ASLTSGPALT…VSWVVSTGFA (163 aa). A disulfide bridge links Cys-409 with Cys-447. Residues His-424, Asn-426, Phe-427, Asp-443, His-471, Glu-473, Leu-476, and Asp-496 each contribute to the substrate site.

This sequence belongs to the glycosyl hydrolase 54 family.

The protein resides in the secreted. The enzyme catalyses Hydrolysis of terminal non-reducing alpha-L-arabinofuranoside residues in alpha-L-arabinosides.. Its pathway is glycan metabolism; L-arabinan degradation. Functionally, alpha-L-arabinofuranosidase involved in the degradation of arabinoxylan, a major component of plant hemicellulose. Able to hydrolyze 1,5-, 1,3- and 1,2-alpha-linkages not only in L-arabinofuranosyl oligosaccharides, but also in polysaccharides containing terminal non-reducing L-arabinofuranoses in side chains, like L-arabinan, arabinogalactan and arabinoxylan. In Aspergillus oryzae (strain ATCC 42149 / RIB 40) (Yellow koji mold), this protein is Alpha-L-arabinofuranosidase B (abfB).